A 107-amino-acid chain; its full sequence is Ribosome-associated factor Y (107 aa).

Positions 85–107 (LNKLQHKSESRRADERLKDSFEN) are disordered.

In terms of assembly, associates mainly with 70S ribosomes.

During stationary phase, prevents 70S dimer formation, probably in order to regulate translation efficiency during transition between the exponential and the stationary phases. In addition, during environmental stress such as cold shock or excessive cell density at stationary phase, stabilizes the 70S ribosome against dissociation, inhibits translation initiation and increase translation accuracy. When normal growth conditions are restored, is quickly released from the ribosome. This Haemophilus influenzae (strain ATCC 51907 / DSM 11121 / KW20 / Rd) protein is Ribosome-associated factor Y.